The chain runs to 360 residues: MNAPLGGIWPWLPLLLTWLTPEVSSSWWYMRATGGSSRVMCDNVPGLVSRQRQLCHRHPDVMRAIGLGVAEWTAECQHQFRQHRWNCNTLDRDHSLFGRVLLRSSRESAFVYAVSSAGVVFAITRACSQGELKSCSCDPKKKGTAKDSKGNFDWGGCSDNIDYGIKFARAFVDAKERKGKDARALMNLHNNRAGRKAVKRFLKQECKCHGVSGSCTLRTCWLAMADFRKTGDYLWRKYNGAIQVVMNQDGTGFTVANKRFKKPTKNDLVYFENSPDYCIRDRDAGSLGTAGRVCNLTSRGMDSCEVMCCGRGYDTSHVTRMTKCECKFHWCCAVRCQDCLEALDVHTCKAPKSVDWAAPT.

The signal sequence occupies residues 1-25; sequence MNAPLGGIWPWLPLLLTWLTPEVSS. 11 disulfide bridges follow: C76-C87, C127-C135, C137-C157, C206-C220, C208-C215, C278-C309, C294-C304, C308-C348, C324-C339, C326-C336, and C331-C332. Residue S212 is the site of O-palmitoleoyl serine; by PORCN attachment. N295 carries N-linked (GlcNAc...) asparagine glycosylation.

It belongs to the Wnt family. In terms of processing, palmitoleoylation is required for efficient binding to frizzled receptors. Depalmitoleoylation leads to Wnt signaling pathway inhibition.

The protein localises to the secreted. It localises to the extracellular space. Its subcellular location is the extracellular matrix. Functionally, ligand for members of the frizzled family of seven transmembrane receptors. Functions in the canonical Wnt signaling pathway that results in activation of transcription factors of the TCF/LEF family. Functions as a upstream regulator of FGF10 expression. Plays an important role in embryonic lung development. May contribute to embryonic brain development by regulating the proliferation of dopaminergic precursors and neurons. The chain is Protein Wnt-2 (WNT2) from Felis catus (Cat).